A 104-amino-acid polypeptide reads, in one-letter code: MSDTAEQRWSVYLIRNNRNALYCGVTNDVERRFNQHQSGKGAKALKGKGPLVLEWSCAFENKSMAMKAEYFIKQLTKTKKELLVQESAVIQVGEGQSFVFYSRK.

One can recognise a GIY-YIG domain in the interval 7–82 (QRWSVYLIRN…KQLTKTKKEL (76 aa)).

This sequence belongs to the UPF0213 family.

The protein is UPF0213 protein VIBHAR_05350 of Vibrio campbellii (strain ATCC BAA-1116).